A 336-amino-acid chain; its full sequence is Flap endonuclease 1 (336 aa).

The interval 1–98 (MGADIGDLFE…AEIEERKKRR (98 aa)) is N-domain. The Mg(2+) site is built by Asp-27, Asp-80, Glu-151, Glu-153, Asp-172, Asp-174, and Asp-235. Residues 115–256 (DAKKYAQAAG…KALNYIKTYG (142 aa)) form an I-domain region. Positions 328–336 (TQATLERWF) are interaction with PCNA.

The protein belongs to the XPG/RAD2 endonuclease family. FEN1 subfamily. In terms of assembly, interacts with PCNA. PCNA stimulates the nuclease activity without altering cleavage specificity. Mg(2+) is required as a cofactor.

In terms of biological role, structure-specific nuclease with 5'-flap endonuclease and 5'-3' exonuclease activities involved in DNA replication and repair. During DNA replication, cleaves the 5'-overhanging flap structure that is generated by displacement synthesis when DNA polymerase encounters the 5'-end of a downstream Okazaki fragment. Binds the unpaired 3'-DNA end and kinks the DNA to facilitate 5' cleavage specificity. Cleaves one nucleotide into the double-stranded DNA from the junction in flap DNA, leaving a nick for ligation. Also involved in the base excision repair (BER) pathway. Acts as a genome stabilization factor that prevents flaps from equilibrating into structures that lead to duplications and deletions. Also possesses 5'-3' exonuclease activity on nicked or gapped double-stranded DNA. This Archaeoglobus fulgidus (strain ATCC 49558 / DSM 4304 / JCM 9628 / NBRC 100126 / VC-16) protein is Flap endonuclease 1.